Reading from the N-terminus, the 631-residue chain is DDB1- and CUL4-associated factor 8-like protein 2 (631 aa).

Disordered stretches follow at residues 1-91 (MSHQ…EDFE) and 108-163 (EEET…HEQY). Residues 44 to 54 (SELSVTVTGDG) show a composition bias toward polar residues. 2 stretches are compositionally biased toward acidic residues: residues 77 to 88 (SASEDIELESLE) and 108 to 147 (EEETEREEEDEEIQEEGGEEEEEEEEEEEEEEEEEEEEEE). WD repeat units lie at residues 226 to 265 (DHVGCVNTVHFNQRGTRLASSGDDLKVIVWDWVRQRPVLN), 269 to 310 (GHTN…YFNN), 316 to 356 (QHRG…PASK), 364 to 404 (DKKV…KKEN), 420 to 459 (DFPTNITCVVYSHDGTELLASYNDDDIYLFNSSHSDGAQY), 467 to 507 (RNNT…IIQF), and 511 to 550 (SREGTINCLEPHPYLPVLACSGLDHDVKIWTPTAKAATEL). The segment at 594 to 631 (QDWRSGEAEFPDEESDESSSTSETSEEEVQDRVQCMPS) is disordered.

Belongs to the WD repeat DCAF8 family.

The sequence is that of DDB1- and CUL4-associated factor 8-like protein 2 (DCAF8L2) from Homo sapiens (Human).